Consider the following 318-residue polypeptide: Adenylate isopentenyltransferase 4 (318 aa).

12–19 (GATGSGKS) contacts ATP.

This sequence belongs to the IPP transferase family. Mg(2+) is required as a cofactor. In terms of tissue distribution, expressed in immature seeds with highest expression in the chalazal endosperm.

The protein localises to the cytoplasm. It carries out the reaction dimethylallyl diphosphate + ADP = N(6)-(dimethylallyl)adenosine 5'-diphosphate + diphosphate. The enzyme catalyses dimethylallyl diphosphate + ATP = N(6)-(dimethylallyl)adenosine 5'-triphosphate + diphosphate. Its function is as follows. Involved in cytokinin biosynthesis. Catalyzes the transfer of an isopentenyl group from dimethylallyl diphosphate (DMAPP) to ATP and ADP, but not to AMP. Has no DMAPP:tRNA isopentenyltransferase activity. The sequence is that of Adenylate isopentenyltransferase 4 (IPT4) from Arabidopsis thaliana (Mouse-ear cress).